A 366-amino-acid chain; its full sequence is Peptide chain release factor 2 (366 aa).

The residue at position 249 (Q249) is an N5-methylglutamine.

Belongs to the prokaryotic/mitochondrial release factor family. In terms of processing, methylated by PrmC. Methylation increases the termination efficiency of RF2.

It is found in the cytoplasm. Functionally, peptide chain release factor 2 directs the termination of translation in response to the peptide chain termination codons UGA and UAA. The sequence is that of Peptide chain release factor 2 from Petrotoga mobilis (strain DSM 10674 / SJ95).